The sequence spans 72 residues: Small ribosomal subunit protein bS18 (72 aa).

This sequence belongs to the bacterial ribosomal protein bS18 family. In terms of assembly, part of the 30S ribosomal subunit. Forms a tight heterodimer with protein bS6.

Functionally, binds as a heterodimer with protein bS6 to the central domain of the 16S rRNA, where it helps stabilize the platform of the 30S subunit. The polypeptide is Small ribosomal subunit protein bS18 (Francisella tularensis subsp. holarctica (strain FTNF002-00 / FTA)).